The chain runs to 287 residues: L-ascorbate peroxidase 3 (287 aa).

Ala-2 carries the N-acetylalanine modification. His-40 (proton acceptor) is an active-site residue. Positions 46–66 are disordered; that stretch reads DAQSKTGGPNGSIRNEEEHTH. His-160 lines the heme b pocket. K(+) contacts are provided by Thr-161, Thr-177, and Asp-184. The chain crosses the membrane as a helical span at residues 259-279; the sequence is ILAQSAFGVAVAAAVVAFGYF. The short motif at 281 to 287 is the AKR2A-binding sequence (ABS) required for peroxisome membrane targeting element; it reads EIRKRMK.

It belongs to the peroxidase family. Ascorbate peroxidase subfamily. Interacts via its C-terminal region with AKR2A and AKR2B. Requires heme b as cofactor.

It is found in the peroxisome membrane. The protein resides in the glyoxysome membrane. It catalyses the reaction L-ascorbate + H2O2 = L-dehydroascorbate + 2 H2O. Its function is as follows. Plays a key role in hydrogen peroxide removal. This Arabidopsis thaliana (Mouse-ear cress) protein is L-ascorbate peroxidase 3 (APX3).